The primary structure comprises 264 residues: Carbohydrate deacetylase (264 aa).

Catalysis depends on D20, which acts as the Proton acceptor. D21, H60, and H127 together coordinate Mg(2+). H215 (proton donor) is an active-site residue.

Belongs to the YdjC deacetylase family. Homodimer. Mg(2+) serves as cofactor.

Its function is as follows. Probably catalyzes the deacetylation of acetylated carbohydrates an important step in the degradation of oligosaccharides. In Thermus thermophilus (strain ATCC 27634 / DSM 579 / HB8), this protein is Carbohydrate deacetylase.